The sequence spans 921 residues: Protein translocase subunit SecA (921 aa).

ATP contacts are provided by residues glutamine 86, 104–108, and aspartate 512; that span reads GEGKT. Zn(2+)-binding residues include cysteine 905, cysteine 907, cysteine 916, and histidine 917.

It belongs to the SecA family. Monomer and homodimer. Part of the essential Sec protein translocation apparatus which comprises SecA, SecYEG and auxiliary proteins SecDF-YajC and YidC. The cofactor is Zn(2+).

Its subcellular location is the cell inner membrane. It localises to the cytoplasm. The enzyme catalyses ATP + H2O + cellular proteinSide 1 = ADP + phosphate + cellular proteinSide 2.. Its function is as follows. Part of the Sec protein translocase complex. Interacts with the SecYEG preprotein conducting channel. Has a central role in coupling the hydrolysis of ATP to the transfer of proteins into and across the cell membrane, serving both as a receptor for the preprotein-SecB complex and as an ATP-driven molecular motor driving the stepwise translocation of polypeptide chains across the membrane. This Caulobacter sp. (strain K31) protein is Protein translocase subunit SecA.